A 628-amino-acid polypeptide reads, in one-letter code: Beta-galactosidase large subunit (628 aa).

Glu468 serves as the catalytic Proton donor. The active-site Nucleophile is Glu536.

It belongs to the glycosyl hydrolase 2 family. In terms of assembly, heterodimer of a large (LacL) and a small subunit (LacM).

It catalyses the reaction Hydrolysis of terminal non-reducing beta-D-galactose residues in beta-D-galactosides.. In terms of biological role, component of a beta-galactosidase. This is Beta-galactosidase large subunit (lacL) from Lactobacillus acidophilus (strain ATCC 700396 / NCK56 / N2 / NCFM).